We begin with the raw amino-acid sequence, 291 residues long: Nucleotide-binding protein PPA0813 (291 aa).

17–24 (GISGAGRR) lines the ATP pocket. Residue 66 to 69 (DVRS) coordinates GTP.

This sequence belongs to the RapZ-like family.

Functionally, displays ATPase and GTPase activities. This is Nucleotide-binding protein PPA0813 from Cutibacterium acnes (strain DSM 16379 / KPA171202) (Propionibacterium acnes).